The following is a 502-amino-acid chain: Glutamate dehydrogenase, mitochondrial (502 aa).

96–98 (HHR) provides a ligand contact to NAD(+). Residues K102 and K126 each contribute to the substrate site. Position 131 (D131) interacts with NAD(+). The active site involves K138. Substrate is bound at residue S394.

It belongs to the Glu/Leu/Phe/Val dehydrogenases family. Homohexamer.

It is found in the mitochondrion matrix. It catalyses the reaction L-glutamate + NAD(+) + H2O = 2-oxoglutarate + NH4(+) + NADH + H(+). The enzyme catalyses L-glutamate + NADP(+) + H2O = 2-oxoglutarate + NH4(+) + NADPH + H(+). Its activity is regulated as follows. Subject to allosteric regulation. Activated by AMP and ADP. This chain is Glutamate dehydrogenase, mitochondrial (gluD), found in Dictyostelium discoideum (Social amoeba).